A 175-amino-acid polypeptide reads, in one-letter code: Ribosome-binding factor A (175 aa).

Residues 129–175 (GAKPAGEADPYRDRGSADEPSDAGGLVIRTSDGLEAENTGDDYQAED) are disordered. Over residues 162-175 (LEAENTGDDYQAED) the composition is skewed to acidic residues.

Belongs to the RbfA family. Monomer. Binds 30S ribosomal subunits, but not 50S ribosomal subunits or 70S ribosomes.

It localises to the cytoplasm. Functionally, one of several proteins that assist in the late maturation steps of the functional core of the 30S ribosomal subunit. Associates with free 30S ribosomal subunits (but not with 30S subunits that are part of 70S ribosomes or polysomes). Required for efficient processing of 16S rRNA. May interact with the 5'-terminal helix region of 16S rRNA. In Mycobacterium marinum (strain ATCC BAA-535 / M), this protein is Ribosome-binding factor A.